The primary structure comprises 599 residues: CAP-Gly domain-containing linker protein 4 (599 aa).

ANK repeat units follow at residues 65–101 (TSVS…NVND), 149–180 (TNMN…DVDA), and 186–215 (NFGT…NPAF). In terms of domain architecture, CAP-Gly 1 spans 303 to 345 (GTTEFASGQWAGIELDEPEGKNNGSVGRVQYFKCAPKYGIFAP). The tract at residues 387–482 (SGLMTSKKEN…TSAANNTHRE (96 aa)) is disordered. The segment covering 443-462 (LSTSSSSGKKTLSKSPSLPS) has biased composition (low complexity). Residues 468-478 (LKSSTTSAANN) are compositionally biased toward polar residues. Residues 505 to 547 (GTTNFAPGYWYGIELEKPHGKNDGSVGGVQYFSCSPRYGIFAP) form the CAP-Gly 2 domain. Serine 557 bears the Phosphoserine mark. The tract at residues 565-599 (SSNKQNHSYPGFRRSFSTTSASSQKEINRRNAFAK) is disordered. The span at 576 to 587 (FRRSFSTTSASS) shows a compositional bias: low complexity.

The polypeptide is CAP-Gly domain-containing linker protein 4 (Clip4) (Rattus norvegicus (Rat)).